Reading from the N-terminus, the 289-residue chain is Glyoxylate/succinic semialdehyde reductase 1 (289 aa).

Position 1 is an N-acetylmethionine (Met-1). Residues 4–18 (GFLG…MSMN) and Thr-95 contribute to the NADP(+) site. Lys-170 is a catalytic residue. Residue Lys-238 participates in NADP(+) binding.

Belongs to the HIBADH-related family. NP60 subfamily.

It is found in the cytoplasm. Its subcellular location is the cytosol. The catalysed reaction is glycolate + NADP(+) = glyoxylate + NADPH + H(+). It catalyses the reaction 4-hydroxybutanoate + NADP(+) = succinate semialdehyde + NADPH + H(+). The ratio of NADPH/NADP(+) may regulate enzymatic activity. Its function is as follows. Catalyzes the NADPH-dependent reduction of glyoxylate to glycolate as well as succinic semialdehyde (SSA) to gamma-hydroxybutyrate in vitro. May function in redox homeostasis and play a role in oxidative stress tolerance by detoxifying glyoxylate and SSA generated in glycolate metabolism and GABA metabolism, respectively. This is Glyoxylate/succinic semialdehyde reductase 1 (GLYR1) from Arabidopsis thaliana (Mouse-ear cress).